Consider the following 237-residue polypeptide: MPEATAGPLSAEQGASLYRLMTWLSPAFPVGAFSYSSGLEWAVEAGDVADAASLRDWLGAMLEHGAGFCDGVFLAQAYRAVEAGDDAALRDVAELAAAMVPSAERHLETTAQGKAFIEIVRHAWASDGLARAVGACNGALAYPVAVGLVSATHRVPLAATLHAFLHAVVSNWISAGARLVPLGQTDSQRLLAALEPAVIATGDRALRASLDDLGGATFRADLASLRHETQYTRLFRS.

Belongs to the UreF family. In terms of assembly, ureD, UreF and UreG form a complex that acts as a GTP-hydrolysis-dependent molecular chaperone, activating the urease apoprotein by helping to assemble the nickel containing metallocenter of UreC. The UreE protein probably delivers the nickel.

It is found in the cytoplasm. Required for maturation of urease via the functional incorporation of the urease nickel metallocenter. This chain is Urease accessory protein UreF, found in Rhodopseudomonas palustris (strain HaA2).